Reading from the N-terminus, the 361-residue chain is DNA replication and repair protein RecF (361 aa).

Position 30-37 (30-37) interacts with ATP; it reads GPNGSGKT.

This sequence belongs to the RecF family.

The protein resides in the cytoplasm. The RecF protein is involved in DNA metabolism; it is required for DNA replication and normal SOS inducibility. RecF binds preferentially to single-stranded, linear DNA. It also seems to bind ATP. The protein is DNA replication and repair protein RecF of Yersinia pseudotuberculosis serotype IB (strain PB1/+).